Consider the following 353-residue polypeptide: Mitochondrial distribution and morphology protein 12 (353 aa).

An SMP-LTD domain is found at 1 to 330 (MSFDIKWENL…WPSWICLDMN (330 aa)). Composition is skewed to acidic residues over residues 64–75 (DEFYEDTTDSPE), 84–103 (TGDD…DDDG), and 330–342 (NDDD…EENP). 2 disordered regions span residues 64-140 (DEFY…NRSR) and 330-353 (NDDD…HVGS).

The protein belongs to the MDM12 family. Component of the ER-mitochondria encounter structure (ERMES) or MDM complex, composed of MMM1, MDM10, MDM12 and MDM34. An MMM1 homodimer associates with one molecule of MDM12 on each side in a pairwise head-to-tail manner, and the SMP-LTD domains of MMM1 and MDM12 generate a continuous hydrophobic tunnel for phospholipid trafficking.

Its subcellular location is the mitochondrion outer membrane. It is found in the endoplasmic reticulum membrane. Functionally, component of the ERMES/MDM complex, which serves as a molecular tether to connect the endoplasmic reticulum (ER) and mitochondria. Components of this complex are involved in the control of mitochondrial shape and protein biogenesis, and function in nonvesicular lipid trafficking between the ER and mitochondria. MDM12 is required for the interaction of the ER-resident membrane protein MMM1 and the outer mitochondrial membrane-resident beta-barrel protein MDM10. The MDM12-MMM1 subcomplex functions in the major beta-barrel assembly pathway that is responsible for biogenesis of all mitochondrial outer membrane beta-barrel proteins, and acts in a late step after the SAM complex. The MDM10-MDM12-MMM1 subcomplex further acts in the TOM40-specific pathway after the action of the MDM12-MMM1 complex. Essential for establishing and maintaining the structure of mitochondria and maintenance of mtDNA nucleoids. The polypeptide is Mitochondrial distribution and morphology protein 12 (Candida tropicalis (strain ATCC MYA-3404 / T1) (Yeast)).